Reading from the N-terminus, the 43-residue chain is Protein PsbN (43 aa).

A helical membrane pass occupies residues 4-24 (GILVVIFISCLLVSFTGYTIY).

The protein belongs to the PsbN family.

The protein localises to the plastid. It is found in the chloroplast thylakoid membrane. Its function is as follows. May play a role in photosystem I and II biogenesis. This is Protein PsbN from Chaetosphaeridium globosum (Charophycean green alga).